Reading from the N-terminus, the 351-residue chain is Rhodopsin (351 aa).

At 1 to 36 the chain is on the extracellular side; sequence MNGTEGPYFYVPMVNTTGVVRSPYEYPQYYLVNPAA. Residues N2 and N15 are each glycosylated (N-linked (GlcNAc...) asparagine). The chain crosses the membrane as a helical span at residues 37–61; sequence FAVLGAYMFFLIIFGFPINFLTLYV. Residues 62-73 lie on the Cytoplasmic side of the membrane; the sequence is TLEHKKLRTPLN. The chain crosses the membrane as a helical span at residues 74 to 96; it reads YILLNLAVADLFMVIGGFTTTMY. The Extracellular segment spans residues 97-110; sequence SSMHGYFVLGRLGC. An intrachain disulfide couples C110 to C187. The helical transmembrane segment at 111-133 threads the bilayer; sequence NLEGFSATLGGMISLWSLAVLAI. The 'Ionic lock' involved in activated form stabilization motif lies at 134–136; that stretch reads ERW. Residues 134 to 152 lie on the Cytoplasmic side of the membrane; that stretch reads ERWVVVCKPTSNFRFGENH. Residues 153–173 traverse the membrane as a helical segment; that stretch reads AIMGVSLTWTMALACTVPPLV. The Extracellular portion of the chain corresponds to 174–202; it reads GWSRYIPEGMQCSCGIDYYTRAEGFNNES. N200 carries N-linked (GlcNAc...) asparagine glycosylation. Residues 203-224 traverse the membrane as a helical segment; it reads FVLYMFFCHFMVPLIIIFFCYG. The Cytoplasmic portion of the chain corresponds to 225-252; the sequence is RLLCAVKEAAAAQQESETTQRAEREVTR. A helical transmembrane segment spans residues 253 to 274; the sequence is MVILMVIGYLVCWLPYASVAWF. Residues 275–286 are Extracellular-facing; that stretch reads IFTHQGSEFGPL. Residues 287–308 traverse the membrane as a helical segment; it reads FMTIPAFFAKSSSIYNPVIYIC. At K296 the chain carries N6-(retinylidene)lysine. Residues 309 to 351 are Cytoplasmic-facing; sequence MNKQFRNCMITTLFCGKNPFEGEEEGASSTKTEASSASSVSPA. Residue C323 is the site of S-palmitoyl cysteine attachment. Residues 330–351 form a disordered region; it reads GEEEGASSTKTEASSASSVSPA. Positions 335 to 351 are enriched in low complexity; it reads ASSTKTEASSASSVSPA.

This sequence belongs to the G-protein coupled receptor 1 family. Opsin subfamily. Phosphorylated on some or all of the serine and threonine residues present in the C-terminal region. In terms of processing, contains one covalently linked retinal chromophore.

The protein localises to the membrane. Its subcellular location is the cell projection. It localises to the cilium. It is found in the photoreceptor outer segment. Its function is as follows. Photoreceptor required for image-forming vision at low light intensity. While most salt water fish species use retinal as chromophore, most freshwater fish use 3-dehydroretinal, or a mixture of retinal and 3-dehydroretinal. Light-induced isomerization of 11-cis to all-trans retinal triggers a conformational change that activates signaling via G-proteins. Subsequent receptor phosphorylation mediates displacement of the bound G-protein alpha subunit by arrestin and terminates signaling. This Neoniphon sammara (Spotfin squirrelfish) protein is Rhodopsin (rho).